The following is a 318-amino-acid chain: 2-keto-3-deoxygluconate permease (318 aa).

The next 10 helical transmembrane spans lie at 10-30 (IPGG…TFTP), 42-62 (GLIT…GASI), 76-96 (VLVV…GTFL), 105-125 (MLAG…NGGL), 139-159 (AGAF…VILG), 163-183 (IATF…IGFA), 199-219 (VQTL…LSVI), 224-244 (FAGI…LILA), 263-283 (AGAA…FAPV), and 289-309 (ALVA…TALW).

The protein belongs to the KdgT transporter family.

The protein resides in the cell inner membrane. The catalysed reaction is 2-dehydro-3-deoxy-D-gluconate(in) + H(+)(in) = 2-dehydro-3-deoxy-D-gluconate(out) + H(+)(out). Its function is as follows. Catalyzes the proton-dependent uptake of 2-keto-3-deoxygluconate (KDG) into the cell. The protein is 2-keto-3-deoxygluconate permease of Pectobacterium carotovorum subsp. carotovorum (Erwinia carotovora subsp. carotovora).